The primary structure comprises 472 residues: Pentatricopeptide repeat-containing protein At3g18970 (472 aa).

PPR repeat units lie at residues 107 to 139, 146 to 180, 181 to 216, 219 to 253, 256 to 286, 287 to 321, 322 to 352, and 358 to 388; these read NERT…MVKK, SELI…TSVT, WNAM…GSGV, TDTT…GFTP, DVFI…MKVK, NVFT…GIKP, NEIT…MKTR, and VIEH…MPIK. Positions 393–472 are type E motif; degenerate; sequence LLRSLCNACS…IKTRPGYSFV (80 aa).

The protein belongs to the PPR family. PCMP-E subfamily.

In Arabidopsis thaliana (Mouse-ear cress), this protein is Pentatricopeptide repeat-containing protein At3g18970 (PCMP-E93).